We begin with the raw amino-acid sequence, 122 residues long: Large ribosomal subunit protein uL14 (122 aa).

This sequence belongs to the universal ribosomal protein uL14 family. In terms of assembly, part of the 50S ribosomal subunit. Forms a cluster with proteins L3 and L19. In the 70S ribosome, L14 and L19 interact and together make contacts with the 16S rRNA in bridges B5 and B8.

Its function is as follows. Binds to 23S rRNA. Forms part of two intersubunit bridges in the 70S ribosome. The sequence is that of Large ribosomal subunit protein uL14 from Erythrobacter litoralis (strain HTCC2594).